The following is a 179-amino-acid chain: Pyridoxal 5'-phosphate synthase subunit PdxT (179 aa).

Residue 48–50 (GES) participates in L-glutamine binding. Cysteine 79 functions as the Nucleophile in the catalytic mechanism. Residues arginine 101 and 127–128 (IR) each bind L-glutamine. Residues histidine 163 and glutamate 165 each act as charge relay system in the active site.

Belongs to the glutaminase PdxT/SNO family. In the presence of PdxS, forms a dodecamer of heterodimers. Only shows activity in the heterodimer.

It catalyses the reaction aldehydo-D-ribose 5-phosphate + D-glyceraldehyde 3-phosphate + L-glutamine = pyridoxal 5'-phosphate + L-glutamate + phosphate + 3 H2O + H(+). It carries out the reaction L-glutamine + H2O = L-glutamate + NH4(+). It functions in the pathway cofactor biosynthesis; pyridoxal 5'-phosphate biosynthesis. Catalyzes the hydrolysis of glutamine to glutamate and ammonia as part of the biosynthesis of pyridoxal 5'-phosphate. The resulting ammonia molecule is channeled to the active site of PdxS. The chain is Pyridoxal 5'-phosphate synthase subunit PdxT from Francisella tularensis subsp. holarctica (strain FTNF002-00 / FTA).